Here is a 267-residue protein sequence, read N- to C-terminus: GTP cyclohydrolase MptA (267 aa).

Belongs to the GTP cyclohydrolase IV family. Homodimer. The cofactor is Fe(2+).

It carries out the reaction GTP + H2O = 7,8-dihydroneopterin 2',3'-cyclic phosphate + formate + diphosphate + H(+). The protein operates within cofactor biosynthesis; 5,6,7,8-tetrahydromethanopterin biosynthesis. Functionally, converts GTP to 7,8-dihydro-D-neopterin 2',3'-cyclic phosphate, the first intermediate in the biosynthesis of coenzyme methanopterin. This chain is GTP cyclohydrolase MptA, found in Pyrococcus furiosus (strain ATCC 43587 / DSM 3638 / JCM 8422 / Vc1).